The chain runs to 115 residues: NADH-ubiquinone oxidoreductase chain 3 (115 aa).

Transmembrane regions (helical) follow at residues 3 to 23, 55 to 75, and 87 to 107; these read LVIA…VAFW, FFLV…LLPI, and LLSL…YEWL.

The protein belongs to the complex I subunit 3 family. Core subunit of respiratory chain NADH dehydrogenase (Complex I) which is composed of 45 different subunits. Interacts with TMEM186. Interacts with TMEM242.

It is found in the mitochondrion inner membrane. The enzyme catalyses a ubiquinone + NADH + 5 H(+)(in) = a ubiquinol + NAD(+) + 4 H(+)(out). Core subunit of the mitochondrial membrane respiratory chain NADH dehydrogenase (Complex I) which catalyzes electron transfer from NADH through the respiratory chain, using ubiquinone as an electron acceptor. Essential for the catalytic activity of complex I. The polypeptide is NADH-ubiquinone oxidoreductase chain 3 (Ornithorhynchus anatinus (Duckbill platypus)).